The sequence spans 96 residues: Small ribosomal subunit protein uS19 (96 aa).

The protein belongs to the universal ribosomal protein uS19 family.

Protein S19 forms a complex with S13 that binds strongly to the 16S ribosomal RNA. The chain is Small ribosomal subunit protein uS19 from Gemmatimonas aurantiaca (strain DSM 14586 / JCM 11422 / NBRC 100505 / T-27).